The following is a 208-amino-acid chain: FMRFamide-like neuropeptide 18 (208 aa).

The N-terminal stretch at 1–21 (MQRWSGVLLISLCCLLRGALA) is a signal peptide. Residues 22–83 (YTEPIYEIVE…VWEKRESSVQ (62 aa)) constitute a propeptide that is removed on maturation. Phenylalanine amide is present on phenylalanine 93. Residues 97-101 (AYFDE) constitute a propeptide that is removed on maturation. A Phenylalanine amide modification is found at phenylalanine 111. A propeptide spanning residues 115-119 (SYFDE) is cleaved from the precursor. Phenylalanine amide is present on phenylalanine 129. Positions 133-137 (DVPMD) are excised as a propeptide. Position 147 is a phenylalanine amide (phenylalanine 147). Positions 151-158 (DYMADSFD) are excised as a propeptide. Phenylalanine 169 and phenylalanine 180 each carry phenylalanine amide. Residues 184 to 195 (SDLEEHYAGVLL) constitute a propeptide that is removed on maturation. A Phenylalanine amide modification is found at phenylalanine 205.

This sequence belongs to the FARP (FMRFamide related peptide) family. May be processed by convertase egl-3. As to expression, expressed in head neurons and weakly in ventral nerve cord. Expressed in the interneurons AVA, AIY and RIG, the motor neuron RIM and the pharyngeal neurons M2 and M3. EMPGVLRF-amide: Expressed in cholinergic pharyngeal motoneurons M2 and M3.

It localises to the secreted. In terms of biological role, FMRFamide-like neuropeptides. Ligand to G-protein coupled receptor npr-1. Involved in modulating locomotion quiescence during the sleep-like state called lethargus which occurs during molting between larval and adult stages, acting via npr-1. Together with flp-1, plays a homeostatic role by acting on the GABAergic neural transmission at neuromuscular junctions to prevent overexcitation of the locomotor circuit. Plays a role in the navigational capacity of sperm and the targeting of sperm derived from males to the fertilization site in the uterus of hermaphrodites. SVPGVLRF-amide: Excites muscle tension. Functionally, activates the G-protein coupled receptor npr-1 more effectively than other flp-18 peptides. Inhibits the activity of dissected pharyngeal myogenic muscle system. The chain is FMRFamide-like neuropeptide 18 from Caenorhabditis elegans.